The primary structure comprises 280 residues: CAG pathogenicity island protein 12 (280 aa).

Residues 1-20 (MKLRASVLIGATILCLILSA) form the signal peptide. Cys-21 is lipidated: N-palmitoyl cysteine. A lipid anchor (S-diacylglycerol cysteine) is attached at Cys-21.

It is found in the cell membrane. The protein is CAG pathogenicity island protein 12 (cagT) of Helicobacter pylori (strain ATCC 700392 / 26695) (Campylobacter pylori).